The primary structure comprises 463 residues: Glutamate--tRNA ligase 1 (463 aa).

The 'HIGH' region signature appears at 10–20 (PSPTGYLHIGG). The short motif at 238-242 (KLSKR) is the 'KMSKS' region element. Residue lysine 241 participates in ATP binding.

The protein belongs to the class-I aminoacyl-tRNA synthetase family. Glutamate--tRNA ligase type 1 subfamily. Monomer.

Its subcellular location is the cytoplasm. It catalyses the reaction tRNA(Glu) + L-glutamate + ATP = L-glutamyl-tRNA(Glu) + AMP + diphosphate. Its function is as follows. Catalyzes the attachment of glutamate to tRNA(Glu) in a two-step reaction: glutamate is first activated by ATP to form Glu-AMP and then transferred to the acceptor end of tRNA(Glu). The protein is Glutamate--tRNA ligase 1 of Helicobacter pylori (strain Shi470).